The following is a 130-amino-acid chain: Small ribosomal subunit protein uS9 (130 aa).

The segment covering 99 to 110 (KKAGFLTRDPRM) has biased composition (basic and acidic residues). The interval 99-130 (KKAGFLTRDPRMKERKKYGLKKARRAPQFSKR) is disordered. Basic residues predominate over residues 111 to 130 (KERKKYGLKKARRAPQFSKR).

Belongs to the universal ribosomal protein uS9 family.

The chain is Small ribosomal subunit protein uS9 from Clostridium botulinum (strain Eklund 17B / Type B).